The following is a 459-amino-acid chain: Ribulose bisphosphate carboxylase large chain (459 aa).

Lysine 4 bears the N6,N6,N6-trimethyllysine mark. Asparagine 113 and threonine 163 together coordinate substrate. The active-site Proton acceptor is lysine 165. A substrate-binding site is contributed by lysine 167. Mg(2+) is bound by residues lysine 191, aspartate 193, and glutamate 194. N6-carboxylysine is present on lysine 191. Residue histidine 284 is the Proton acceptor of the active site. The substrate site is built by arginine 285, histidine 317, and serine 369.

Belongs to the RuBisCO large chain family. Type I subfamily. Heterohexadecamer of 8 large chains and 8 small chains; disulfide-linked. The disulfide link is formed within the large subunit homodimers. The cofactor is Mg(2+). Post-translationally, the disulfide bond which can form in the large chain dimeric partners within the hexadecamer appears to be associated with oxidative stress and protein turnover.

It is found in the plastid. The protein localises to the chloroplast. It catalyses the reaction 2 (2R)-3-phosphoglycerate + 2 H(+) = D-ribulose 1,5-bisphosphate + CO2 + H2O. It carries out the reaction D-ribulose 1,5-bisphosphate + O2 = 2-phosphoglycolate + (2R)-3-phosphoglycerate + 2 H(+). Functionally, ruBisCO catalyzes two reactions: the carboxylation of D-ribulose 1,5-bisphosphate, the primary event in carbon dioxide fixation, as well as the oxidative fragmentation of the pentose substrate in the photorespiration process. Both reactions occur simultaneously and in competition at the same active site. The chain is Ribulose bisphosphate carboxylase large chain from Apium graveolens (Celery).